Consider the following 231-residue polypeptide: Extracellular deoxyribonuclease (231 aa).

Residues 1–20 (MMIFRFVTTLAASLPLLTFA) form the signal peptide.

The protein belongs to the EndA/NucM nuclease family.

Its subcellular location is the secreted. In Vibrio cholerae serotype O1 (strain ATCC 39315 / El Tor Inaba N16961), this protein is Extracellular deoxyribonuclease (dns).